A 445-amino-acid chain; its full sequence is GTPase Der (445 aa).

2 EngA-type G domains span residues 3-167 (PVIA…NLPD) and 180-353 (IKLA…ASAN). GTP-binding positions include 9-16 (GRPNVGKS), 56-60 (DTGGF), 119-122 (NKAE), 186-193 (GRPNVGKS), 233-237 (DTAGL), and 298-301 (NKWD). In terms of domain architecture, KH-like spans 354 to 438 (RKMSTPVLTR…PLRIQLKSSV (85 aa)).

This sequence belongs to the TRAFAC class TrmE-Era-EngA-EngB-Septin-like GTPase superfamily. EngA (Der) GTPase family. As to quaternary structure, associates with the 50S ribosomal subunit.

GTPase that plays an essential role in the late steps of ribosome biogenesis. In Polaromonas naphthalenivorans (strain CJ2), this protein is GTPase Der.